The primary structure comprises 431 residues: Phosphate regulon sensor protein PhoR (431 aa).

The Cytoplasmic segment spans residues 1–13 (MLERLSWKRLALE). Residues 14 to 34 (LFLACIPALILGAFVGHLPWF) traverse the membrane as a helical segment. At 35–38 (LLAA) the chain is on the periplasmic side. A helical transmembrane segment spans residues 39–59 (VTGLLIWHFWNLMRLSWWLWV). The Cytoplasmic portion of the chain corresponds to 60–431 (DRSMTPPPGR…PERLIARNDA (372 aa)). One can recognise a PAS domain in the interval 98–166 (KRFRSGAESL…KQRDFSKPLN (69 aa)). The Histidine kinase domain maps to 210-425 (NVSHELRTPL…RFSFLLPERL (216 aa)). His213 is subject to Phosphohistidine; by autocatalysis.

Its subcellular location is the cell inner membrane. The enzyme catalyses ATP + protein L-histidine = ADP + protein N-phospho-L-histidine.. Functionally, member of the two-component regulatory system PhoR/PhoB involved in the phosphate regulon genes expression. PhoR may function as a membrane-associated protein kinase that phosphorylates PhoB in response to environmental signals. In Klebsiella pneumoniae, this protein is Phosphate regulon sensor protein PhoR (phoR).